The sequence spans 107 residues: MASTAARRLAWVAVRPGALWSGPRGRRGGDVYTVPGSSGLSQVPSRSVIVTRSGAILPKPVKMSFGLLRVFSIVIPFLYVGTLISKNFAALLEEHDIFVPEDDDDDD.

A mitochondrion-targeting transit peptide spans 1-47 (MASTAARRLAWVAVRPGALWSGPRGRRGGDVYTVPGSSGLSQVPSRS). Residues 48 to 65 (VIVTRSGAILPKPVKMSF) lie on the Mitochondrial matrix side of the membrane. The helical transmembrane segment at 66–85 (GLLRVFSIVIPFLYVGTLIS) threads the bilayer. Residues 81-85 (GTLIS) carry the GXXXX[G/A/S] motif. Over 86–107 (KNFAALLEEHDIFVPEDDDDDD) the chain is Mitochondrial intermembrane.

It belongs to the SMDT1/EMRE family. In terms of assembly, component of the uniplex complex, composed of MCU, EMRE/SMDT1, MICU1 and MICU2 (or MICU3) in a 4:4:1:1 stoichiometry. The number of EMRE/SMDT1 molecules is hovewer variable, ranging from 1 to 4 copies per uniplex complex, leading to uniplex complexes with distinct gatekeeping profiles. Interacts (via its C-terminal poly-Asp tail) with MCUR1; the interaction is direct. Unprocessed form interacts (via transit peptide) with MAIP1. Undergoes proteolytic degradation in neurons: degraded by AFG3L2 and SPG7 before SMDT1/EMRE assembly with the uniporter complex, limiting the availability of SMDT1/EMRE for MCU assembly and promoting efficient assembly of gatekeeper subunits with MCU. In terms of tissue distribution, widely expressed.

The protein resides in the mitochondrion inner membrane. In terms of biological role, essential regulatory subunit of the mitochondrial calcium uniporter complex (uniplex), a complex that mediates calcium uptake into mitochondria. Required to bridge the calcium-sensing proteins MICU1 with the calcium-conducting subunit MCU. Acts by mediating activation of MCU and retention of MICU1 to the MCU pore, in order to ensure tight regulation of the uniplex complex and appropriate responses to intracellular calcium signaling. The sequence is that of Essential MCU regulator, mitochondrial from Mus musculus (Mouse).